Here is a 230-residue protein sequence, read N- to C-terminus: UPF0494 membrane protein C1348.07 (230 aa).

Transmembrane regions (helical) follow at residues 78 to 98, 120 to 140, and 148 to 168; these read WPLL…NFEV, IWGP…GLIY, and AIPL…VAMV.

Belongs to the UPF0494 family.

Its subcellular location is the vacuole. It is found in the membrane. This Schizosaccharomyces pombe (strain 972 / ATCC 24843) (Fission yeast) protein is UPF0494 membrane protein C1348.07.